A 224-amino-acid chain; its full sequence is LexA repressor (224 aa).

A DNA-binding region (H-T-H motif) is located at residues 31-51; that stretch reads RAEIANTLGFKSANAAEEHLQ. Residues S142 and K179 each act as for autocatalytic cleavage activity in the active site.

This sequence belongs to the peptidase S24 family. Homodimer.

The enzyme catalyses Hydrolysis of Ala-|-Gly bond in repressor LexA.. Its function is as follows. Represses a number of genes involved in the response to DNA damage (SOS response), including recA and lexA. In the presence of single-stranded DNA, RecA interacts with LexA causing an autocatalytic cleavage which disrupts the DNA-binding part of LexA, leading to derepression of the SOS regulon and eventually DNA repair. The sequence is that of LexA repressor from Delftia acidovorans (strain DSM 14801 / SPH-1).